The chain runs to 141 residues: Hemoglobin subunit alpha-1 (141 aa).

The region spanning 1-141 (VLSAADKGNV…VSTVLTSKYR (141 aa)) is the Globin domain. Residue His58 participates in O2 binding. His87 lines the heme b pocket.

It belongs to the globin family. In terms of assembly, heterotetramer of two alpha chains and two beta chains. In terms of tissue distribution, red blood cells.

In terms of biological role, involved in oxygen transport from the lung to the various peripheral tissues. The chain is Hemoglobin subunit alpha-1 from Bos mutus grunniens (Wild yak).